Reading from the N-terminus, the 74-residue chain is U2-sicaritoxin-Sdo1a (74 aa).

The signal sequence occupies residues 1 to 20 (MKLSFCFFLCAIVLFSFAEA). The propeptide occupies 21–39 (RINPNQLKRLRELVRDDEP). Disulfide bonds link Cys42-Cys59, Cys49-Cys62, and Cys58-Cys71.

In terms of tissue distribution, expressed by the venom gland.

It is found in the secreted. This chain is U2-sicaritoxin-Sdo1a, found in Hexophthalma dolichocephala (Afrotropical spider).